A 457-amino-acid chain; its full sequence is Glycerol-3-phosphate acyltransferase 3 (457 aa).

The chain crosses the membrane as a helical span at residues 14–34 (WLTLVGSLILLPSAFGLSLGI). 2 positions are modified to phosphoserine: S68 and S77. The next 2 membrane-spanning stretches (helical) occupy residues 137 to 157 (ISPKLTIVWVLGVLVRYCFLL) and 161 to 181 (VTLAFIGISLLIIGTTLVGQL). Positions 229-234 (HTSPID) match the HXXXXD motif motif. Positions 429 to 457 (GNGSPSLALDSSTVDNHGSPEPAFRSESL) are disordered. Positions 431-444 (GSPSLALDSSTVDN) are enriched in polar residues.

This sequence belongs to the 1-acyl-sn-glycerol-3-phosphate acyltransferase family.

It localises to the endoplasmic reticulum membrane. It catalyses the reaction sn-glycerol 3-phosphate + an acyl-CoA = a 1-acyl-sn-glycero-3-phosphate + CoA. The enzyme catalyses a 1-acyl-sn-glycero-3-phosphate + an acyl-CoA = a 1,2-diacyl-sn-glycero-3-phosphate + CoA. It carries out the reaction dodecanoyl-CoA + sn-glycerol 3-phosphate = 1-dodecanoyl-sn-glycerol 3-phosphate + CoA. The catalysed reaction is sn-glycerol 3-phosphate + hexadecanoyl-CoA = 1-hexadecanoyl-sn-glycero-3-phosphate + CoA. It catalyses the reaction sn-glycerol 3-phosphate + (9Z)-octadecenoyl-CoA = 1-(9Z-octadecenoyl)-sn-glycero-3-phosphate + CoA. The enzyme catalyses (9Z,12Z)-octadecadienoyl-CoA + sn-glycerol 3-phosphate = 1-(9Z,12Z)-octadecadienoyl-sn-glycero-3-phosphate + CoA. It carries out the reaction 1-tetradecanoyl-sn-glycerol 3-phosphate + (9Z)-octadecenoyl-CoA = 1-tetradecanoyl-2-(9Z)-octadecenoyl-sn-glycero-3-phosphate + CoA. The catalysed reaction is 1-hexadecanoyl-sn-glycero-3-phosphate + (9Z)-octadecenoyl-CoA = 1-hexadecanoyl-2-(9Z-octadecenoyl)-sn-glycero-3-phosphate + CoA. It catalyses the reaction 1-(9Z-octadecenoyl)-sn-glycero-3-phosphate + (9Z)-octadecenoyl-CoA = 1,2-di-(9Z-octadecenoyl)-sn-glycero-3-phosphate + CoA. The enzyme catalyses 1-(6Z,9Z,12Z-octadecatrienoyl)-sn-glycero-3-phosphate + (9Z)-octadecenoyl-CoA = (6Z,9Z,12Z)-octadecatrienoyl-2-(9Z)-octadecenoyl-sn-glycero-3-phosphate + CoA. It carries out the reaction 1-(9Z,12Z,15Z)-octadecatrienoyl-sn-glycero-3-phosphate + (9Z)-octadecenoyl-CoA = 1-(9Z,12Z,15Z)-octadecatrienoyl-2-(9Z)-octadecenoyl-sn-glycero-3-phosphate + CoA. The catalysed reaction is 1-(9Z-octadecenoyl)-sn-glycero-3-phosphate + tetradecanoyl-CoA = 1-(9Z)-octadecenoyl-2-tetradecanoyl-sn-glycero-3-phosphate + CoA. It catalyses the reaction 1-(9Z-octadecenoyl)-sn-glycero-3-phosphate + hexadecanoyl-CoA = 1-(9Z)-octadecenoyl-2-hexadecanoyl-sn-glycero-3-phosphate + CoA. The enzyme catalyses 1-(9Z-octadecenoyl)-sn-glycero-3-phosphate + octadecanoyl-CoA = 1-(9Z-octadecenoyl)-2-octadecanoyl-sn-glycero-3-phosphate + CoA. It carries out the reaction 1-(9Z-octadecenoyl)-sn-glycero-3-phosphate + (9Z,12Z)-octadecadienoyl-CoA = 1-(9Z)-octadecenoyl-2-(9Z,12Z)-octadecadienoyl-sn-glycero-3-phosphate + CoA. The catalysed reaction is 1-(5Z,8Z,11Z,14Z-eicosatetraenoyl)-sn-glycero-3-phosphate + (9Z)-octadecenoyl-CoA = 1-(5Z,8Z,11Z,14Z)-eicosatetraenoyl-2-(9Z)-octadecenoyl-sn-glycero-3-phosphate + CoA. The protein operates within glycerolipid metabolism; triacylglycerol biosynthesis. It participates in phospholipid metabolism; CDP-diacylglycerol biosynthesis; CDP-diacylglycerol from sn-glycerol 3-phosphate: step 1/3. Functionally, converts glycerol-3-phosphate to 1-acyl-sn-glycerol-3-phosphate (lysophosphatidic acid or LPA) by incorporating an acyl moiety at the sn-1 position of the glycerol backbone. Also converts LPA into 1,2-diacyl-sn-glycerol-3-phosphate (phosphatidic acid or PA) by incorporating an acyl moiety at the sn-2 position of the glycerol backbone. Protects cells against lipotoxicity. This chain is Glycerol-3-phosphate acyltransferase 3, found in Rattus norvegicus (Rat).